The chain runs to 347 residues: UPF0284 protein M1425_0030 (347 aa).

It belongs to the UPF0284 family.

This is UPF0284 protein M1425_0030 from Saccharolobus islandicus (strain M.14.25 / Kamchatka #1) (Sulfolobus islandicus).